Reading from the N-terminus, the 247-residue chain is MSQSPEHRTDGRRPEQLRPFSVTWNPMGFALSSLVVHTGRTAVLCSVCLEGKVPRWRKGEGLGWLSAEYRLLPGSTPQRQSRELMKLSGRTQEIQRLIGRSLRAVIDMERLGERTLLIDCDVIQADAGTRTASITGAWLALDQACRSLVEQGVLEQSPLVDQVAAVSVGLVDGQALLDLDYSEDSRAEVDLNVVQAGDGRLLEIQGTAEGAPFSRSQLNELLDLAEPGLSSLMQAQRQAFTEHSSVT.

Phosphate-binding positions include arginine 90 and glycine 128 to arginine 130.

The protein belongs to the RNase PH family. Homohexameric ring arranged as a trimer of dimers.

It catalyses the reaction tRNA(n+1) + phosphate = tRNA(n) + a ribonucleoside 5'-diphosphate. Functionally, phosphorolytic 3'-5' exoribonuclease that plays an important role in tRNA 3'-end maturation. Removes nucleotide residues following the 3'-CCA terminus of tRNAs; can also add nucleotides to the ends of RNA molecules by using nucleoside diphosphates as substrates, but this may not be physiologically important. Probably plays a role in initiation of 16S rRNA degradation (leading to ribosome degradation) during starvation. In Synechococcus sp. (strain CC9605), this protein is Ribonuclease PH.